The chain runs to 422 residues: MLLLLVLLIGASGINAVVYKEVPIQANTDTLEYVHTVWRHGDRTPAELLFPDDITKWPEGLGELTEQGAAQQYRLGQWLKRRYGSWLGEKFNRNAIYIRSSDYNRTLMSAQANMAGLFPPKYPIAGGLMWQPIPVHTISKPTDKELYEEASCPTAEIEMNAQWKSTKANGIRKKFARELSFFSQKLNLPNMELKATWRIFDNLFCEKQNNITWPSWMNSSIFERVDQLYNEVSQLEFHTDTLRRLRGGTLLEEIFHRFSDKASGSLGKEAKFYAYSAHDSTIAALLATLGVFYDIYPKYATCLLIEMHKLANETRLIRVFHKNETDIDRLIEYSIPGCDDPCTLQKLGDDLKKYFPEDWEAECGLKTSFQFIYLVIISILVISTVCSCTMLFVEKQKRKILRFPVDGLRDDTAPMLGGDDSD.

A signal peptide spans 1-13 (MLLLLVLLIGASG). His40 acts as the Nucleophile in catalysis. Asn104, Asn210, and Asn218 each carry an N-linked (GlcNAc...) asparagine glycan. 3 disulfides stabilise this stretch: Cys152/Cys363, Cys205/Cys302, and Cys338/Cys342. The active-site Proton donor is Asp279. N-linked (GlcNAc...) asparagine glycosylation is found at Asn312 and Asn323.

It belongs to the histidine acid phosphatase family.

The enzyme catalyses a phosphate monoester + H2O = an alcohol + phosphate. The sequence is that of Putative acid phosphatase 5 (pho-5) from Caenorhabditis elegans.